Here is a 949-residue protein sequence, read N- to C-terminus: Bifunctional uridylyltransferase/uridylyl-removing enzyme (949 aa).

The interval 1–377 (MARHETSFPE…RFRNRVRKIP (377 aa)) is uridylyltransferase. Residues 378 to 733 (GTLDFVDDGG…VRTHDFHAIT (356 aa)) are uridylyl-removing. Residues 494–610 (VDEHLLRAVD…VDFAERVQSL (117 aa)) enclose the HD domain. ACT domains are found at residues 734 to 815 (EITV…DVIA) and 845 to 926 (VIEV…ERMP). Residues 925-949 (MPSGIIAPTPVPRASHGSKATKAET) form a disordered region.

It belongs to the GlnD family. It depends on Mg(2+) as a cofactor.

It carries out the reaction [protein-PII]-L-tyrosine + UTP = [protein-PII]-uridylyl-L-tyrosine + diphosphate. The catalysed reaction is [protein-PII]-uridylyl-L-tyrosine + H2O = [protein-PII]-L-tyrosine + UMP + H(+). Uridylyltransferase (UTase) activity is inhibited by glutamine, while glutamine activates uridylyl-removing (UR) activity. Functionally, modifies, by uridylylation and deuridylylation, the PII regulatory proteins (GlnB and homologs), in response to the nitrogen status of the cell that GlnD senses through the glutamine level. Under low glutamine levels, catalyzes the conversion of the PII proteins and UTP to PII-UMP and PPi, while under higher glutamine levels, GlnD hydrolyzes PII-UMP to PII and UMP (deuridylylation). Thus, controls uridylylation state and activity of the PII proteins, and plays an important role in the regulation of nitrogen fixation and metabolism. The polypeptide is Bifunctional uridylyltransferase/uridylyl-removing enzyme (Sinorhizobium medicae (strain WSM419) (Ensifer medicae)).